The primary structure comprises 163 residues: NADH-quinone oxidoreductase subunit I (163 aa).

4Fe-4S ferredoxin-type domains are found at residues 53 to 83 (LRRY…IEAG) and 94 to 123 (VRYD…EGPN). Residues C63, C66, C69, C73, C103, C106, C109, and C113 each coordinate [4Fe-4S] cluster.

The protein belongs to the complex I 23 kDa subunit family. As to quaternary structure, NDH-1 is composed of 14 different subunits. Subunits NuoA, H, J, K, L, M, N constitute the membrane sector of the complex. Requires [4Fe-4S] cluster as cofactor.

It localises to the cell inner membrane. It catalyses the reaction a quinone + NADH + 5 H(+)(in) = a quinol + NAD(+) + 4 H(+)(out). Functionally, NDH-1 shuttles electrons from NADH, via FMN and iron-sulfur (Fe-S) centers, to quinones in the respiratory chain. The immediate electron acceptor for the enzyme in this species is believed to be ubiquinone. Couples the redox reaction to proton translocation (for every two electrons transferred, four hydrogen ions are translocated across the cytoplasmic membrane), and thus conserves the redox energy in a proton gradient. The chain is NADH-quinone oxidoreductase subunit I from Agrobacterium fabrum (strain C58 / ATCC 33970) (Agrobacterium tumefaciens (strain C58)).